Here is a 466-residue protein sequence, read N- to C-terminus: ATP synthase subunit beta (466 aa).

153 to 160 (GGAGVGKT) lines the ATP pocket.

The protein belongs to the ATPase alpha/beta chains family. F-type ATPases have 2 components, CF(1) - the catalytic core - and CF(0) - the membrane proton channel. CF(1) has five subunits: alpha(3), beta(3), gamma(1), delta(1), epsilon(1). CF(0) has three main subunits: a(1), b(2) and c(9-12). The alpha and beta chains form an alternating ring which encloses part of the gamma chain. CF(1) is attached to CF(0) by a central stalk formed by the gamma and epsilon chains, while a peripheral stalk is formed by the delta and b chains.

The protein resides in the cell membrane. The enzyme catalyses ATP + H2O + 4 H(+)(in) = ADP + phosphate + 5 H(+)(out). Produces ATP from ADP in the presence of a proton gradient across the membrane. The catalytic sites are hosted primarily by the beta subunits. In Clostridium acetobutylicum (strain ATCC 824 / DSM 792 / JCM 1419 / IAM 19013 / LMG 5710 / NBRC 13948 / NRRL B-527 / VKM B-1787 / 2291 / W), this protein is ATP synthase subunit beta.